A 392-amino-acid chain; its full sequence is INCREASED PETAL GROWTH ANISOTROPY 1-like protein 1 (392 aa).

A coiled-coil region spans residues 11–52 (LLRLVKELQAYLVRNDKLEKENHELRQEVARLRAQVSNLKSH). Polar residues-rich tracts occupy residues 65–76 (QSSYDGSNTDGS) and 100–109 (PTIQGQSTAT). The segment at 65–128 (QSSYDGSNTD…SKRTLGKRSV (64 aa)) is disordered. Residues 269–299 (KDSLTQALQRIQSLQDRLEESVNNTEKMRDS) are a coiled coil.

It belongs to the IPGA1 family.

It localises to the cytoplasm. It is found in the cytoskeleton. Its function is as follows. Microtubule-associated protein probably involved in the regulation of microtubule organization. The protein is INCREASED PETAL GROWTH ANISOTROPY 1-like protein 1 of Arabidopsis thaliana (Mouse-ear cress).